Consider the following 238-residue polypeptide: Flagellar L-ring protein (238 aa).

An N-terminal signal peptide occupies residues Met1–Ser23. Residue Cys24 is the site of N-palmitoyl cysteine attachment. Cys24 carries S-diacylglycerol cysteine lipidation.

The protein belongs to the FlgH family. As to quaternary structure, the basal body constitutes a major portion of the flagellar organelle and consists of four rings (L,P,S, and M) mounted on a central rod.

It localises to the cell outer membrane. The protein resides in the bacterial flagellum basal body. Assembles around the rod to form the L-ring and probably protects the motor/basal body from shearing forces during rotation. The sequence is that of Flagellar L-ring protein from Buchnera aphidicola subsp. Schizaphis graminum (strain Sg).